The primary structure comprises 199 residues: 5'-deoxynucleotidase Ent638_2835 (199 aa).

Substrate contacts are provided by residues 18 to 19 (RW) and H33. Residues 30–142 (VSEHSLQVAM…VKQADALCAY (113 aa)) form the HD domain. 3 residues coordinate a divalent metal cation: H33, H68, and D69. Residues D69, 77–80 (DLPT), and D137 contribute to the substrate site. D137 is a binding site for a divalent metal cation.

This sequence belongs to the 5DNU family. In terms of assembly, homodimer. Requires a divalent metal cation as cofactor.

It is found in the cytoplasm. It catalyses the reaction a 2'-deoxyribonucleoside 5'-phosphate + H2O = a 2'-deoxyribonucleoside + phosphate. Functionally, catalyzes the strictly specific dephosphorylation of 2'-deoxyribonucleoside 5'-monophosphates. The sequence is that of 5'-deoxynucleotidase Ent638_2835 from Enterobacter sp. (strain 638).